A 498-amino-acid chain; its full sequence is TORTIFOLIA1-like protein 5 (498 aa).

HEAT repeat units lie at residues 56–93 (ETFS…SHGD), 97–134 (PHLS…NITG), 136–173 (PFSI…AADE), 177–214 (EQLQ…AVGG), and 219–257 (KAVL…VEEE). The segment at 296–423 (EGDSTEVSES…SSSQAKSNAE (128 aa)) is disordered. Residues 300 to 322 (TEVSESSSSSKSASSGLSATSGK) are compositionally biased toward low complexity. Basic and acidic residues predominate over residues 343–366 (NDVEPLDRGDTPKDVEQEAVVSKE). Over residues 390–400 (NGSNKSQVVQS) the composition is skewed to polar residues. Ser426 carries the phosphoserine modification.

This chain is TORTIFOLIA1-like protein 5, found in Arabidopsis thaliana (Mouse-ear cress).